The primary structure comprises 419 residues: Putative zinc metalloprotease SP_0263 (419 aa).

H18 serves as a coordination point for Zn(2+). E19 is an active-site residue. Position 22 (H22) interacts with Zn(2+). 3 helical membrane passes run 169–191, 345–367, and 388–410; these read LITN…WVLI, ILYF…IPAL, and EIET…AVTW.

The protein belongs to the peptidase M50B family. Zn(2+) is required as a cofactor.

It localises to the cell membrane. In Streptococcus pneumoniae serotype 4 (strain ATCC BAA-334 / TIGR4), this protein is Putative zinc metalloprotease SP_0263.